The sequence spans 121 residues: Large ribosomal subunit protein uL18 (121 aa).

The protein belongs to the universal ribosomal protein uL18 family. As to quaternary structure, part of the 50S ribosomal subunit; part of the 5S rRNA/L5/L18/L25 subcomplex. Contacts the 5S and 23S rRNAs.

This is one of the proteins that bind and probably mediate the attachment of the 5S RNA into the large ribosomal subunit, where it forms part of the central protuberance. The polypeptide is Large ribosomal subunit protein uL18 (Pelobacter propionicus (strain DSM 2379 / NBRC 103807 / OttBd1)).